The chain runs to 705 residues: Choline transporter-like protein 2 (705 aa).

Over 1-31 the chain is Cytoplasmic; that stretch reads MEDQRKYGAYGTPQKYDPTFKGPIYNRGCTD. Thr12 is modified (phosphothreonine). The chain crosses the membrane as a helical span at residues 32–52; sequence VLCCVLLFLAIVGYVAVGLIA. At 53-231 the chain is on the extracellular side; that stretch reads WTHGDPRKVI…RIFEDYTVSW (179 aa). N-linked (GlcNAc...) asparagine glycans are attached at residues Asn186 and Asn199. The helical transmembrane segment at 232 to 252 threads the bilayer; it reads YWIVIGLVIAMVLSLLFIILL. Over 253–255 the chain is Cytoplasmic; it reads RFL. Residues 256–276 traverse the membrane as a helical segment; it reads AGIMVWVMIVLVILVLGYGIF. Over 277 to 314 the chain is Extracellular; it reads HCYMEYARLRGEAGSDISVLDLGFQTDFRVYLHLRQTW. A helical transmembrane segment spans residues 315–335; that stretch reads LAFMIILSILEVIIILLLIFL. At 336 to 363 the chain is on the cytoplasmic side; that stretch reads RKRILIAIALIKEASRAVGYVMCSLLYP. A helical transmembrane segment spans residues 364 to 384; it reads LVTFFLLCLCIAYWASTAVFL. The Extracellular portion of the chain corresponds to 385–455; it reads STSNEAVYKI…IFNAFMFFWL (71 aa). A glycan (N-linked (GlcNAc...) asparagine) is linked at Asn414. Residues 456-478 form a helical membrane-spanning segment; it reads ANFVLALGQVTLAGAFASYYWAL. The Cytoplasmic segment spans residues 479–503; it reads RKPDDMPAFPLFAAFGRALRYHTGS. The helical transmembrane segment at 504–524 threads the bilayer; the sequence is LAFGSLILAIVQIIRVILEYL. Residues 525–562 lie on the Extracellular side of the membrane; sequence DQRLKAAENKFAKFLMTCLKCCFWCLEKFIKFLNRNAY. A helical transmembrane segment spans residues 563 to 583; the sequence is IMIAIYGTNFCTSARNAFFLL. Residues 584 to 598 lie on the Cytoplasmic side of the membrane; it reads MRNIIRVAVLDKVTD. Residues 599-619 traverse the membrane as a helical segment; that stretch reads FLFLLGKLLIVGSVGILAFFF. The Extracellular portion of the chain corresponds to 620–637; sequence FTHRIRIVQDTAPPLNYY. A helical membrane pass occupies residues 638-658; sequence WVPILTVIVGSYLIAHGFFSV. At 659–705 the chain is on the cytoplasmic side; sequence YGMCVDTLFLCFLEDLERNNGSSERPYFMSSTLKKLLNKTNKKPVES.

The protein belongs to the CTL (choline transporter-like) family. Interacts with COCH. Post-translationally, N-glycosylated; contains sialic acid. Not O-glycosylated. Expressed at high levels in lung, colon and in supporting cells of the inner ear (at protein level). Progressively lower levels in brain, tongue, liver and kidney (at protein level). In the tongue, strongly expressed in epithelial cells and in nerves within the musculature. Within the nerves, expression observed in the perineurial cells of the nerve sheath, in the Schwann cells and myelinated nerve fibers (at protein level). In the kidney, prominent expression in glomeruli in the lining of Bowman's capsule and on the mesangial cells adjacent to the vessels within the glomerulus (at protein level). Strongly expressed on the membranes of splenocytes (at protein level).

The protein localises to the cell membrane. It is found in the mitochondrion outer membrane. It carries out the reaction choline(out) + n H(+)(in) = choline(in) + n H(+)(out). The enzyme catalyses ethanolamine(out) + n H(+)(in) = ethanolamine(in) + n H(+)(out). Functionally, choline/H+ antiporter, mainly in mitochodria. Also acts as a low-affinity ethanolamine/H+ antiporter, regulating the supply of extracellular ethanolamine (Etn) for the CDP-Etn pathway, redistribute intracellular Etn and balance the CDP-Cho and CDP-Etn arms of the Kennedy pathway. The sequence is that of Choline transporter-like protein 2 (SLC44A2) from Cavia porcellus (Guinea pig).